Here is a 222-residue protein sequence, read N- to C-terminus: Apoptosis regulator OPG045 (222 aa).

The protein belongs to the orthopoxvirus OPG045 family. As to quaternary structure, homodimer. Interacts with host pro-apoptotic protein BCL2L11 (via BH3 domain). Interacts with host NLRP1. Interacts with host BAK.

The protein localises to the host mitochondrion outer membrane. It is found in the host cytoplasm. Functionally, plays a role in evading host innate immune response by inhibiting host inflammasome activation. Interacts with and inhibits NLR-mediated interleukin-1 beta/IL1B production in infected cells. At the host mitochondria outer membrane, interacts with the BH3 domain of host BAK and prevents BAK from binding active BAX. In turn, host apoptosis is inhibited. This is Apoptosis regulator OPG045 (OPG045) from Homo sapiens (Human).